The primary structure comprises 612 residues: uncharacterized protein (612 aa).

The protein localises to the plastid. It localises to the chloroplast. This is an uncharacterized protein from Pyropia yezoensis (Susabi-nori).